The primary structure comprises 696 residues: UV radiation resistance-associated gene protein (696 aa).

Residues Ser-214 and Ser-218 each carry the phosphoserine modification. Coiled coils occupy residues 251-278 (LLTL…IARL) and 330-394 (NAQQ…RLEL). At Ser-666 the chain carries Phosphoserine. The tract at residues 666–696 (SYSDGEDEFRPRLEHNYSNSDSNITLQTERS) is disordered. The residue at position 667 (Tyr-667) is a Phosphotyrosine. Phosphoserine occurs at positions 668 and 685. The segment covering 681–696 (NYSNSDSNITLQTERS) has biased composition (polar residues).

Functionally, involved in biosynthetic vesicle transport to lysosomes. Acts as a cell growth regulator. Also has a crucial role in controlling organ rotation by regulating membrane-localized Notch receptor endocytosis and subsequent degradation. Regulation of organ rotation is not by induction of autophagy. This is UV radiation resistance-associated gene protein (Uvrag) from Drosophila melanogaster (Fruit fly).